The sequence spans 256 residues: 6-phosphogluconolactonase (256 aa).

Belongs to the glucosamine/galactosamine-6-phosphate isomerase family. 6-phosphogluconolactonase subfamily.

It carries out the reaction 6-phospho-D-glucono-1,5-lactone + H2O = 6-phospho-D-gluconate + H(+). It functions in the pathway carbohydrate degradation; pentose phosphate pathway; D-ribulose 5-phosphate from D-glucose 6-phosphate (oxidative stage): step 2/3. In terms of biological role, hydrolysis of 6-phosphogluconolactone to 6-phosphogluconate. The polypeptide is 6-phosphogluconolactonase (pgl) (Chlamydia muridarum (strain MoPn / Nigg)).